A 662-amino-acid chain; its full sequence is LIM domain kinase 1 (662 aa).

LIM zinc-binding domains follow at residues 24-83 and 84-145; these read PVCA…RFGE and LCHG…MVVT. The 94-residue stretch at 166–259 folds into the PDZ domain; the sequence is LVSIPACSDG…LLQLTIEHDP (94 aa). The interval 262 to 328 is disordered; the sequence is PLPRDLALPC…ASQRKDIGRS (67 aa). Residues 272–287 show a composition bias toward pro residues; it reads SPLPDPHSPLRSPVPA. The segment covering 309 to 320 has biased composition (low complexity); the sequence is SPGSSSVGSPAS. The Protein kinase domain occupies 346 to 611; sequence LIHGEVLGKG…PSFSKLEQWL (266 aa). ATP contacts are provided by residues 352–360 and K375; that span reads LGKGCFGQA. The active site involves D467.

This sequence belongs to the protein kinase superfamily. TKL Ser/Thr protein kinase family. In terms of tissue distribution, expressed predominantly in the brain.

It is found in the cytoplasm. Its subcellular location is the nucleus. It localises to the cytoskeleton. The protein localises to the cell projection. The protein resides in the growth cone. It catalyses the reaction L-seryl-[protein] + ATP = O-phospho-L-seryl-[protein] + ADP + H(+). It carries out the reaction L-threonyl-[protein] + ATP = O-phospho-L-threonyl-[protein] + ADP + H(+). Functionally, protein kinase which regulates actin filament dynamics. Phosphorylates and inactivates the actin binding/depolymerizing factor cofilin, thereby stabilizing the actin cytoskeleton. Required for motility of the axon growth cone. In Gallus gallus (Chicken), this protein is LIM domain kinase 1 (LIMK1).